The primary structure comprises 141 residues: Hemoglobin subunit alpha-2 (141 aa).

The residue at position 1 (S1) is an N-acetylserine. In terms of domain architecture, Globin spans 1 to 141; the sequence is SLSTKDKETV…LARALSEKYR (141 aa). O2 is bound at residue H59. Residue H88 participates in heme b binding.

It belongs to the globin family. As to quaternary structure, hb2 is a heterotetramer of two alpha-2 chains and two beta chains. As to expression, red blood cells.

In terms of biological role, involved in oxygen transport from gills to the various peripheral tissues. The chain is Hemoglobin subunit alpha-2 (hba2) from Notothenia angustata (Rockcod).